We begin with the raw amino-acid sequence, 678 residues long: DNA ligase (678 aa).

NAD(+) contacts are provided by residues 35-39 (DSVYD), 84-85 (SL), and Glu116. The active-site N6-AMP-lysine intermediate is Lys118. 4 residues coordinate NAD(+): Arg139, Glu178, Lys297, and Lys321. Cys415, Cys418, Cys433, and Cys438 together coordinate Zn(2+). In terms of domain architecture, BRCT spans 600–678 (DGNQIFAGKT…EAQLLEMLNE (79 aa)).

It belongs to the NAD-dependent DNA ligase family. LigA subfamily. The cofactor is Mg(2+). Requires Mn(2+) as cofactor.

It carries out the reaction NAD(+) + (deoxyribonucleotide)n-3'-hydroxyl + 5'-phospho-(deoxyribonucleotide)m = (deoxyribonucleotide)n+m + AMP + beta-nicotinamide D-nucleotide.. In terms of biological role, DNA ligase that catalyzes the formation of phosphodiester linkages between 5'-phosphoryl and 3'-hydroxyl groups in double-stranded DNA using NAD as a coenzyme and as the energy source for the reaction. It is essential for DNA replication and repair of damaged DNA. The chain is DNA ligase from Nostoc punctiforme (strain ATCC 29133 / PCC 73102).